The following is a 223-amino-acid chain: Type III pantothenate kinase (223 aa).

An ATP-binding site is contributed by D17–H24. Residues Y81 and G85–R88 each bind substrate. The Proton acceptor role is filled by D87. K(+) is bound at residue D102. S105 contributes to the ATP binding site. T157 contributes to the substrate binding site.

The protein belongs to the type III pantothenate kinase family. In terms of assembly, homodimer. Requires NH4(+) as cofactor. It depends on K(+) as a cofactor.

Its subcellular location is the cytoplasm. The catalysed reaction is (R)-pantothenate + ATP = (R)-4'-phosphopantothenate + ADP + H(+). Its pathway is cofactor biosynthesis; coenzyme A biosynthesis; CoA from (R)-pantothenate: step 1/5. Catalyzes the phosphorylation of pantothenate (Pan), the first step in CoA biosynthesis. This is Type III pantothenate kinase from Helicobacter pylori (strain J99 / ATCC 700824) (Campylobacter pylori J99).